Here is a 697-residue protein sequence, read N- to C-terminus: PAN2-PAN3 deadenylation complex subunit PAN3 (697 aa).

The C3H1-type zinc-finger motif lies at Thr-7 to Gln-36. The interval Gln-40–Ala-67 is disordered. 2 consecutive short sequence motifs (PABPC-interacting motif-2 (PAM-2)) follow at residues Leu-69 to Leu-89 and Phe-106 to Pro-126. A disordered region spans residues Phe-106 to Pro-240. A compositionally biased stretch (polar residues) spans Asp-119 to Asp-153. A compositionally biased stretch (low complexity) spans Gln-172–Gln-187. The segment covering Gly-212–Phe-224 has biased composition (polar residues). The pseudokinase domain stretch occupies residues Gln-308–Thr-576. ATP is bound by residues Arg-361, Asp-416–Ser-423, and Ser-470–Lys-471. The stretch at Pro-577–Tyr-615 forms a coiled coil. The tract at residues Leu-616 to Glu-697 is knob domain.

This sequence belongs to the protein kinase superfamily. PAN3 family. As to quaternary structure, homodimer. Forms a heterotrimer with a catalytic subunit PAN2 to form the poly(A)-nuclease (PAN) deadenylation complex. Interacts (via PAM-2 motif) with poly(A)-binding protein PAB1 (via PABC domain), conferring substrate specificity of the enzyme complex.

Its subcellular location is the cytoplasm. Regulatory subunit of the poly(A)-nuclease (PAN) deadenylation complex, one of two cytoplasmic mRNA deadenylases involved in mRNA turnover. PAN specifically shortens poly(A) tails of RNA and the activity is stimulated by poly(A)-binding protein PAB1. PAN deadenylation is followed by rapid degradation of the shortened mRNA tails by the CCR4-NOT complex. Deadenylated mRNAs are then degraded by two alternative mechanisms, namely exosome-mediated 3'-5' exonucleolytic degradation, or deadenylation-dependent mRNA decaping and subsequent 5'-3' exonucleolytic degradation by XRN1. May also be involved in post-transcriptional maturation of mRNA poly(A) tails. PAN3 acts as a positive regulator for PAN activity, recruiting the catalytic subunit PAN2 to mRNA via its interaction with RNA and with PAB1. The protein is PAN2-PAN3 deadenylation complex subunit PAN3 of Candida albicans (strain SC5314 / ATCC MYA-2876) (Yeast).